The chain runs to 59 residues: MKAFYGILIIFILISMIDLSKQVFINAKCRGSPECLPKCKEAIGKAAGKCMNGKCKCYP.

The first 22 residues, 1–22 (MKAFYGILIIFILISMIDLSKQ), serve as a signal peptide directing secretion. Disulfide bonds link Cys-29-Cys-50, Cys-35-Cys-55, and Cys-39-Cys-57. The tract at residues 48–55 (GKCMNGKC) is interaction with Ca(2+)-activated K(+) channels.

The protein belongs to the short scorpion toxin superfamily. Potassium channel inhibitor family. Alpha-KTx 04 subfamily. In terms of tissue distribution, expressed by the venom gland.

It localises to the secreted. Functionally, potently blocks Kv1.1/KCNA1 (85%), Kv1.2/KCNA2 (91%), Kv1.3/KCNA3 (89%), Kv1.6/KCNA6 (94%), and Shaker (97%). The sequence is that of Potassium channel toxin alpha-KTx 4.1 from Tityus serrulatus (Brazilian scorpion).